The primary structure comprises 342 residues: Farnesyl pyrophosphate synthase 2 (342 aa).

The isopentenyl diphosphate site is built by K48, R51, and Q86. Residues D93 and D97 each contribute to the Mg(2+) site. Residue R102 participates in dimethylallyl diphosphate binding. R103 contributes to the isopentenyl diphosphate binding site. 5 residues coordinate dimethylallyl diphosphate: K190, T191, Q229, K246, and K255.

The protein belongs to the FPP/GGPP synthase family. It depends on Mg(2+) as a cofactor.

It is found in the cytoplasm. It carries out the reaction isopentenyl diphosphate + dimethylallyl diphosphate = (2E)-geranyl diphosphate + diphosphate. It catalyses the reaction isopentenyl diphosphate + (2E)-geranyl diphosphate = (2E,6E)-farnesyl diphosphate + diphosphate. Its pathway is isoprenoid biosynthesis; farnesyl diphosphate biosynthesis; farnesyl diphosphate from geranyl diphosphate and isopentenyl diphosphate: step 1/1. It functions in the pathway isoprenoid biosynthesis; geranyl diphosphate biosynthesis; geranyl diphosphate from dimethylallyl diphosphate and isopentenyl diphosphate: step 1/1. In terms of biological role, catalyzes the sequential condensation of isopentenyl pyrophosphate with the allylic pyrophosphates, dimethylallyl pyrophosphate, and then with the resultant geranylpyrophosphate to the ultimate product farnesyl pyrophosphate. This chain is Farnesyl pyrophosphate synthase 2 (FPS2), found in Parthenium argentatum (Guayule rubber plant).